The sequence spans 357 residues: Homoarginine-6-hydroxylase 2-ODD-C23.2 (357 aa).

One can recognise a Fe2OG dioxygenase domain in the interval 208–308; sequence PFWVMRIIGY…RVCVAFFYET (101 aa). Residues His-231, Asp-233, and His-289 each contribute to the Fe cation site. Arg-299 is a binding site for 2-oxoglutarate.

This sequence belongs to the iron/ascorbate-dependent oxidoreductase family. Requires Fe(2+) as cofactor. In terms of tissue distribution, expressed in senescent leaves.

The protein localises to the cytoplasm. It is found in the cytosol. It carries out the reaction L-homoarginine + 2-oxoglutarate + O2 = 6-hydroxy-L-homoarginine + succinate + CO2. It catalyses the reaction L-arginine + 2-oxoglutarate + O2 = 5-hydroxy-L-arginine + succinate + CO2. Its activity is regulated as follows. Slightly inhibited by canavanine (Can), the 5-oxa-analog of arginine. Functionally, 2-oxoglutarate-dependent dioxygenase catalyzing homoarginine 6-hydroxylation and arginine-5-hydroxylation thus producing 6-hydroxy-L-homoarginine and 5-hydroxy-L-arginine, respectively. Guanidine (Gd) is in turn synthesized by the spontaneous conversion of 6-hydroxy-L-homoarginine and 5-hydroxy-L-arginine to (S)-2-amino-6-oxohexanoate (RHEA:79843) and L-glutamate 5-semialdehyde (RHEA:31527); guanidine is a nitrogen-rich compound that may serve as a defense or signaling substance. The polypeptide is Homoarginine-6-hydroxylase 2-ODD-C23.2 (Arabidopsis thaliana (Mouse-ear cress)).